Reading from the N-terminus, the 512-residue chain is AMP phosphorylase (512 aa).

Residues G166, S192–G197, and T201 contribute to the AMP site. D254 functions as the Proton donor in the catalytic mechanism. The AMP site is built by S262 and K286.

This sequence belongs to the thymidine/pyrimidine-nucleoside phosphorylase family. Type 2 subfamily.

The catalysed reaction is AMP + phosphate = alpha-D-ribose 1,5-bisphosphate + adenine. It catalyses the reaction CMP + phosphate = cytosine + alpha-D-ribose 1,5-bisphosphate. It carries out the reaction UMP + phosphate = alpha-D-ribose 1,5-bisphosphate + uracil. Catalyzes the conversion of AMP and phosphate to adenine and ribose 1,5-bisphosphate (R15P). Exhibits phosphorylase activity toward CMP and UMP in addition to AMP. Functions in an archaeal AMP degradation pathway, together with R15P isomerase and RubisCO. This chain is AMP phosphorylase, found in Methanothrix thermoacetophila (strain DSM 6194 / JCM 14653 / NBRC 101360 / PT) (Methanosaeta thermophila).